A 182-amino-acid polypeptide reads, in one-letter code: Orotate phosphoribosyltransferase (182 aa).

5-phospho-alpha-D-ribose 1-diphosphate-binding positions include Arg91, Lys92, Lys95, His97, and 117-125 (EDVTTTGGS). Positions 121 and 149 each coordinate orotate.

It belongs to the purine/pyrimidine phosphoribosyltransferase family. PyrE subfamily. In terms of assembly, homodimer. The cofactor is Mg(2+).

The catalysed reaction is orotidine 5'-phosphate + diphosphate = orotate + 5-phospho-alpha-D-ribose 1-diphosphate. Its pathway is pyrimidine metabolism; UMP biosynthesis via de novo pathway; UMP from orotate: step 1/2. Catalyzes the transfer of a ribosyl phosphate group from 5-phosphoribose 1-diphosphate to orotate, leading to the formation of orotidine monophosphate (OMP). The protein is Orotate phosphoribosyltransferase of Pyrococcus furiosus (strain ATCC 43587 / DSM 3638 / JCM 8422 / Vc1).